The following is a 20-amino-acid chain: Fibrinogen beta chain (20 aa).

A Sulfotyrosine modification is found at tyrosine 5.

Heterohexamer; disulfide linked. Contains 2 sets of 3 non-identical chains (alpha, beta and gamma). The 2 heterotrimers are in head to head conformation with the N-termini in a small central domain. In terms of processing, conversion of fibrinogen to fibrin is triggered by thrombin, which cleaves fibrinopeptides A and B from alpha and beta chains, and thus exposes the N-terminal polymerization sites responsible for the formation of the soft clot.

The protein localises to the secreted. In terms of biological role, cleaved by the protease thrombin to yield monomers which, together with fibrinogen alpha (FGA) and fibrinogen gamma (FGG), polymerize to form an insoluble fibrin matrix. Fibrin has a major function in hemostasis as one of the primary components of blood clots. In addition, functions during the early stages of wound repair to stabilize the lesion and guide cell migration during re-epithelialization. Was originally thought to be essential for platelet aggregation, based on in vitro studies using anticoagulated blood. However subsequent studies have shown that it is not absolutely required for thrombus formation in vivo. Enhances expression of SELP in activated platelets. Maternal fibrinogen is essential for successful pregnancy. Fibrin deposition is also associated with infection, where it protects against IFNG-mediated hemorrhage. May also facilitate the antibacterial immune response via both innate and T-cell mediated pathways. In Capra hircus (Goat), this protein is Fibrinogen beta chain (FGB).